A 342-amino-acid chain; its full sequence is Glucan endo-1,3-beta-glucosidase (342 aa).

The signal sequence occupies residues methionine 1–glutamine 26. Glutamate 119 acts as the Proton donor in catalysis. The Nucleophile role is filled by glutamate 261.

Belongs to the glycosyl hydrolase 17 family. Post-translationally, the N-terminus is blocked.

The protein resides in the vacuole. It carries out the reaction Hydrolysis of (1-&gt;3)-beta-D-glucosidic linkages in (1-&gt;3)-beta-D-glucans.. Its function is as follows. Is thought to be an important plant defense-related product against fungal pathogens. Accumulation of the glucanase can be detected as early as 4 hours after inoculation. This Brassica campestris (Field mustard) protein is Glucan endo-1,3-beta-glucosidase (BGL).